The following is a 415-amino-acid chain: MAMSSRVIEQAIAARSAATVLRRLRRIDKDDLLAAMGIGLRKGVDEILAANGADVDRGRDAGMDEALLDRLTLTPERIEGMAVGLEGVAHLDDPVGEVVRGWHTPLGVKIEQVRVPIGVIGIIYEARPNVTSDAAGICLKSGNACLLRGSSSALESNRAVIAAMRSRLPEEIREAVQLVEGGHEVTDELMTARGYVDLLIPRGGAGLINAVVTGAKVPVIQTGTGNCHLVIDVSADVEMAVNIAVNAKTQRPSVCNAIETVLVHRGIADSAVRPLVDAMSERGVTVHGDEESIRLDPRIVPAAPDEYDNEYLSLDLALRIVDDLEEAVDHIAKHGSGHSETIVTKSMSSQEFFASSVDAAAVLVNCSSRFVDGGEFGFGAEIGISTQKLHARGPMGLREMTTTTYVLRGDGQTRP.

It belongs to the gamma-glutamyl phosphate reductase family.

The protein resides in the cytoplasm. The enzyme catalyses L-glutamate 5-semialdehyde + phosphate + NADP(+) = L-glutamyl 5-phosphate + NADPH + H(+). It participates in amino-acid biosynthesis; L-proline biosynthesis; L-glutamate 5-semialdehyde from L-glutamate: step 2/2. In terms of biological role, catalyzes the NADPH-dependent reduction of L-glutamate 5-phosphate into L-glutamate 5-semialdehyde and phosphate. The product spontaneously undergoes cyclization to form 1-pyrroline-5-carboxylate. This is Gamma-glutamyl phosphate reductase from Cutibacterium acnes (strain DSM 16379 / KPA171202) (Propionibacterium acnes).